The chain runs to 1394 residues: Ninein-like protein (1394 aa).

EF-hand domains are found at residues 8 to 43 (HYVSRLRDVYSSCDTTGTGFLDQEELTQLCTKLGLE) and 42 to 77 (LEEQLPALLHILLGDDRLARVNFEEFKEGFVAVLSS). Disordered stretches follow at residues 77–99 (SGSGVEPSDEEGSSSESATSCAV) and 126–166 (KYGS…KEPQ). Residue Ser149 is modified to Phosphoserine. Residues 151–166 (ESLKSDEDAESAKEPQ) are compositionally biased toward basic and acidic residues. EF-hand domains lie at 197–232 (TPENLVQGIWHELGIGSSGHLNEQELAVVCRSIGLH) and 234–269 (LEKQELEELFSKLDQDGDGRVSLAEFQLGLFGHEPP). Ca(2+) is bound by residues Asp247, Asp249, Asp251, Arg253, and Glu258. Coiled-coil stretches lie at residues 382–423 (RQEL…MDDC), 461–515 (WEQA…DSEK), and 544–584 (EQFT…SRQS). Positions 494-496 (KEN) match the KEN box motif. Positions 578 to 602 (LPRSRQSPAGTPGTHRRRIPGRGPA) are disordered. The D-box signature appears at 632–640 (RMQLETKVN). Positions 835-863 (EKEKLEQTYREQVEGLVQEADVLRALLKN) form a coiled coil. A compositionally biased stretch (polar residues) spans 866-893 (TVVSDQQERTPSSMSLGPDSRQQPTARQ). The disordered stretch occupies residues 866–977 (TVVSDQQERT…SARTLTGQGQ (112 aa)). The span at 939–951 (RSSENLGVRDNHQ) shows a compositional bias: basic and acidic residues. Coiled coils occupy residues 1057–1229 (SESE…ELTE) and 1269–1331 (GARV…LRKQ).

Interacts with gamma-tubulin and TUBGCP4. Interacts with anaphase promoting complex/cyclosome (APC/C). Interacts with CDC20 and FZR1. Interacts with LCA5 and USH2A. Post-translationally, phosphorylated by PLK1 which disrupts its centrosome association and interaction with gamma-tubulin. Ubiquitinated by the APC/C complex leading to its degradation.

It localises to the cytoplasm. The protein localises to the cytoskeleton. The protein resides in the microtubule organizing center. Its subcellular location is the centrosome. In terms of biological role, involved in the microtubule organization in interphase cells. Overexpression induces the fragmentation of the Golgi, and causes lysosomes to disperse toward the cell periphery; it also interferes with mitotic spindle assembly. Involved in vesicle transport in photoreceptor cells. The chain is Ninein-like protein (Ninl) from Mus musculus (Mouse).